Reading from the N-terminus, the 175-residue chain is MAEKRNIFLIGPMGAGKSTIGRQLAQLLSMDFVDSDNEIEQRAGADISWIFDVEGEDGFRKREERIINELTQRQGIVLSTGGGAVLSKENRNHLSARGIVIYLETTVEKQYQRTQRDKKRPLLQEVEDPRQVLEDLAKIRNPLYEEIADITLPTDEQSAKVMATQIVDLIDNLHG.

Residue 14-19 (GAGKST) coordinates ATP. Serine 18 contributes to the Mg(2+) binding site. Aspartate 36, arginine 60, and glycine 82 together coordinate substrate. Arginine 120 provides a ligand contact to ATP. Substrate is bound at residue arginine 140. Glutamine 157 is a binding site for ATP.

Belongs to the shikimate kinase family. As to quaternary structure, monomer. It depends on Mg(2+) as a cofactor.

It is found in the cytoplasm. The catalysed reaction is shikimate + ATP = 3-phosphoshikimate + ADP + H(+). It participates in metabolic intermediate biosynthesis; chorismate biosynthesis; chorismate from D-erythrose 4-phosphate and phosphoenolpyruvate: step 5/7. Catalyzes the specific phosphorylation of the 3-hydroxyl group of shikimic acid using ATP as a cosubstrate. The polypeptide is Shikimate kinase (Pasteurella multocida (strain Pm70)).